The following is a 242-amino-acid chain: MRKSFKDSLKALEADIQFANTLASEYPEEYDGGYVQMRLSYSPAAHLFLFLLQWTDCHFAGALGLLRILIYKAYVDGKTTMSLHERKTSIREFYDVLFPSLLQLHGGITDVEERKQKEICDKRYRKKDRTDKGKMSEIDLEREEECGICLEIRNKVVLPTCNHSMCINCYRNWRARSQSCPFCRGSLKRVNSGDLWIYTCSAEIADLPAIYKENLKRLLIYIDKLPLVTSDPNLVPYAPLPR.

Residues 146-184 (CGICLEIRNKVVLPTCNHSMCINCYRNWRARSQSCPFCR) form an RING-type zinc finger.

In terms of assembly, interacts with ATP1/SDIRIP1. Expressed in germinating seeds, flower organs and siliques.

The protein localises to the cytoplasm. It localises to the cytosol. The catalysed reaction is S-ubiquitinyl-[E2 ubiquitin-conjugating enzyme]-L-cysteine + [acceptor protein]-L-lysine = [E2 ubiquitin-conjugating enzyme]-L-cysteine + N(6)-ubiquitinyl-[acceptor protein]-L-lysine.. Possesses E3 ubiquitin-protein ligase activity in vitro when associated with the E2 enzyme UBC8 in vitro. Plays combinatory roles with AIRP1 in the positive regulation of the abscisic acid-mediated drought stress response. Plays a positive role in abscisic acid- and high salinity-regulated seed germination through the ubiquitin-proteasome-dependent down-regulation of ATP1/SDIRIP1. This Arabidopsis thaliana (Mouse-ear cress) protein is E3 ubiquitin-protein ligase AIRP2.